A 176-amino-acid chain; its full sequence is Ubiquitin-conjugating enzyme E2-20 kDa (176 aa).

Over residues 1-20 the composition is skewed to polar residues; sequence MDSDMQNQNPHTNSKNSSSA. The segment at 1-25 is disordered; the sequence is MDSDMQNQNPHTNSKNSSSAGMAVD. The UBC core domain maps to 28–175; sequence SVTKRLRSEL…LMQRYKEIDE (148 aa). C113 (glycyl thioester intermediate) is an active-site residue.

This sequence belongs to the ubiquitin-conjugating enzyme family.

It catalyses the reaction S-ubiquitinyl-[E1 ubiquitin-activating enzyme]-L-cysteine + [E2 ubiquitin-conjugating enzyme]-L-cysteine = [E1 ubiquitin-activating enzyme]-L-cysteine + S-ubiquitinyl-[E2 ubiquitin-conjugating enzyme]-L-cysteine.. The protein operates within protein modification; protein ubiquitination. Catalyzes the covalent attachment of ubiquitin to other proteins. The chain is Ubiquitin-conjugating enzyme E2-20 kDa (ubc11) from Schizosaccharomyces pombe (strain 972 / ATCC 24843) (Fission yeast).